We begin with the raw amino-acid sequence, 58 residues long: Large ribosomal subunit protein uL30 (58 aa).

It belongs to the universal ribosomal protein uL30 family. In terms of assembly, part of the 50S ribosomal subunit.

This is Large ribosomal subunit protein uL30 from Cytophaga hutchinsonii (strain ATCC 33406 / DSM 1761 / CIP 103989 / NBRC 15051 / NCIMB 9469 / D465).